A 583-amino-acid polypeptide reads, in one-letter code: ATP-dependent lipid A-core flippase (583 aa).

The next 7 helical transmembrane spans lie at 18–38 (LWPI…TLII), 65–85 (IFMW…MSGF), 105–127 (LLFN…ATLM), 143–163 (GALI…IMMF), 167–187 (WQLS…IKLV), 252–272 (VFEP…LYIA), and 277–297 (VIEM…IALM). The ABC transmembrane type-1 domain occupies 30 to 312 (IIASITLIIN…LTNVSAQFQR (283 aa)). Residues 344 to 580 (IIFDNVTFFY…KGVYSQLYKF (237 aa)) form the ABC transporter domain. 378-385 (GRSGSGKS) lines the ATP pocket.

Belongs to the ABC transporter superfamily. Lipid exporter (TC 3.A.1.106) family. As to quaternary structure, homodimer.

Its subcellular location is the cell inner membrane. The enzyme catalyses ATP + H2O + lipid A-core oligosaccharideSide 1 = ADP + phosphate + lipid A-core oligosaccharideSide 2.. Involved in lipopolysaccharide (LPS) biosynthesis. Translocates lipid A-core from the inner to the outer leaflet of the inner membrane. Transmembrane domains (TMD) form a pore in the inner membrane and the ATP-binding domain (NBD) is responsible for energy generation. This Blochmanniella floridana protein is ATP-dependent lipid A-core flippase.